The sequence spans 303 residues: Methionyl-tRNA formyltransferase (303 aa).

Residue 110 to 113 (SLLP) participates in (6S)-5,6,7,8-tetrahydrofolate binding.

It belongs to the Fmt family.

It carries out the reaction L-methionyl-tRNA(fMet) + (6R)-10-formyltetrahydrofolate = N-formyl-L-methionyl-tRNA(fMet) + (6S)-5,6,7,8-tetrahydrofolate + H(+). Functionally, attaches a formyl group to the free amino group of methionyl-tRNA(fMet). The formyl group appears to play a dual role in the initiator identity of N-formylmethionyl-tRNA by promoting its recognition by IF2 and preventing the misappropriation of this tRNA by the elongation apparatus. This chain is Methionyl-tRNA formyltransferase, found in Ehrlichia ruminantium (strain Welgevonden).